The following is a 388-amino-acid chain: Lipid-A-disaccharide synthase (388 aa).

This sequence belongs to the LpxB family.

It catalyses the reaction a lipid X + a UDP-2-N,3-O-bis[(3R)-3-hydroxyacyl]-alpha-D-glucosamine = a lipid A disaccharide + UDP + H(+). Its pathway is bacterial outer membrane biogenesis; LPS lipid A biosynthesis. Condensation of UDP-2,3-diacylglucosamine and 2,3-diacylglucosamine-1-phosphate to form lipid A disaccharide, a precursor of lipid A, a phosphorylated glycolipid that anchors the lipopolysaccharide to the outer membrane of the cell. This Burkholderia thailandensis (strain ATCC 700388 / DSM 13276 / CCUG 48851 / CIP 106301 / E264) protein is Lipid-A-disaccharide synthase.